The following is a 92-amino-acid chain: Small ribosomal subunit protein bS20 (92 aa).

Positions 1-24 (MANSAQARKRARQAAKANSHNSAL) are disordered.

This sequence belongs to the bacterial ribosomal protein bS20 family.

Functionally, binds directly to 16S ribosomal RNA. The chain is Small ribosomal subunit protein bS20 from Paraburkholderia xenovorans (strain LB400).